The following is a 134-amino-acid chain: Small ribosomal subunit protein uS12 (134 aa).

A disordered region spans residues 1-27 (MPTIQQLVRKGRESFADKSKSPALNSC). The span at 10–20 (KGRESFADKSK) shows a compositional bias: basic and acidic residues. Aspartate 89 carries the post-translational modification 3-methylthioaspartic acid. The interval 103 to 134 (DTAGVNGRTQRRSKYGAKRPKPGQAPAAKGKK) is disordered. Residues 111-123 (TQRRSKYGAKRPK) are compositionally biased toward basic residues. Over residues 124-134 (PGQAPAAKGKK) the composition is skewed to low complexity.

This sequence belongs to the universal ribosomal protein uS12 family. As to quaternary structure, part of the 30S ribosomal subunit. Contacts proteins S8 and S17. May interact with IF1 in the 30S initiation complex.

In terms of biological role, with S4 and S5 plays an important role in translational accuracy. Its function is as follows. Interacts with and stabilizes bases of the 16S rRNA that are involved in tRNA selection in the A site and with the mRNA backbone. Located at the interface of the 30S and 50S subunits, it traverses the body of the 30S subunit contacting proteins on the other side and probably holding the rRNA structure together. The combined cluster of proteins S8, S12 and S17 appears to hold together the shoulder and platform of the 30S subunit. The chain is Small ribosomal subunit protein uS12 from Porphyromonas gingivalis (strain ATCC 33277 / DSM 20709 / CIP 103683 / JCM 12257 / NCTC 11834 / 2561).